We begin with the raw amino-acid sequence, 136 residues long: Nucleoside diphosphate kinase (136 aa).

ATP is bound by residues lysine 9, phenylalanine 57, arginine 85, threonine 91, arginine 102, and asparagine 112. The active-site Pros-phosphohistidine intermediate is the histidine 115.

Belongs to the NDK family. In terms of assembly, homotetramer. It depends on Mg(2+) as a cofactor.

The protein localises to the cytoplasm. It carries out the reaction a 2'-deoxyribonucleoside 5'-diphosphate + ATP = a 2'-deoxyribonucleoside 5'-triphosphate + ADP. The catalysed reaction is a ribonucleoside 5'-diphosphate + ATP = a ribonucleoside 5'-triphosphate + ADP. Major role in the synthesis of nucleoside triphosphates other than ATP. The ATP gamma phosphate is transferred to the NDP beta phosphate via a ping-pong mechanism, using a phosphorylated active-site intermediate. This chain is Nucleoside diphosphate kinase, found in Acetivibrio thermocellus (strain ATCC 27405 / DSM 1237 / JCM 9322 / NBRC 103400 / NCIMB 10682 / NRRL B-4536 / VPI 7372) (Clostridium thermocellum).